Consider the following 220-residue polypeptide: MRTRVKICGLTREADIASAVQAGADAIGFVFYPGSKRYVQPVLAARLRRTVPAFVDVVALFVNPAPADVQAVLDQVGPDLIQFHGDESAAECARYGTRFLRAFRTGAPGLDTPGNLAAACRAYDAAAGWLFDSYSAGYGGSGQAFDHALLAGVRADAAARPLILSGGLNAANVGTAIEACRPWAVDVSSGVETAPGEKSPDKIRALLDAVRQADDRLRGL.

It belongs to the TrpF family.

The catalysed reaction is N-(5-phospho-beta-D-ribosyl)anthranilate = 1-(2-carboxyphenylamino)-1-deoxy-D-ribulose 5-phosphate. The protein operates within amino-acid biosynthesis; L-tryptophan biosynthesis; L-tryptophan from chorismate: step 3/5. This is N-(5'-phosphoribosyl)anthranilate isomerase from Bordetella petrii (strain ATCC BAA-461 / DSM 12804 / CCUG 43448).